Reading from the N-terminus, the 65-residue chain is Large ribosomal subunit protein bL32 (65 aa).

Belongs to the bacterial ribosomal protein bL32 family.

The chain is Large ribosomal subunit protein bL32 from Metamycoplasma arthritidis (strain 158L3-1) (Mycoplasma arthritidis).